The chain runs to 1036 residues: Isoleucine--tRNA ligase (1036 aa).

The 'HIGH' region motif lies at 46 to 56; sequence PFATGLPHYGH. The 'KMSKS' region signature appears at 589–593; that stretch reads KMSKR. An ATP-binding site is contributed by K592.

It belongs to the class-I aminoacyl-tRNA synthetase family. IleS type 2 subfamily. As to quaternary structure, monomer. The cofactor is Zn(2+).

The protein localises to the cytoplasm. The enzyme catalyses tRNA(Ile) + L-isoleucine + ATP = L-isoleucyl-tRNA(Ile) + AMP + diphosphate. Its function is as follows. Catalyzes the attachment of isoleucine to tRNA(Ile). As IleRS can inadvertently accommodate and process structurally similar amino acids such as valine, to avoid such errors it has two additional distinct tRNA(Ile)-dependent editing activities. One activity is designated as 'pretransfer' editing and involves the hydrolysis of activated Val-AMP. The other activity is designated 'posttransfer' editing and involves deacylation of mischarged Val-tRNA(Ile). The protein is Isoleucine--tRNA ligase of Chlamydia trachomatis serovar A (strain ATCC VR-571B / DSM 19440 / HAR-13).